The chain runs to 441 residues: UBX domain-containing protein 6 (441 aa).

Residues 1–10 are mediates interaction with LMAN1; it reads MKKFFQEIKA. Disordered stretches follow at residues 12–57, 62–81, and 86–113; these read IKFK…MAAA, RLEQ…SIRN, and ELRA…EEGS. Positions 27–36 are enriched in basic and acidic residues; the sequence is VGEKAPKEKP. The VCP/p97-interacting motif (VIM) stretch occupies residues 51–63; sequence EAQMAAAAALARL. Positions 175-244 constitute a PUB domain; that stretch reads VDTIAKYLDN…GPEEFYVLSE (70 aa). Residues 332–408 enclose the UBX domain; it reads RKYTYTLLRV…GLVPSALLTF (77 aa).

As to quaternary structure, interacts with VCP through the PUB domain (via C-terminus) and VIM motif (via N-terminus); the interaction is direct. Forms a ternary complex with CAV1 and VCP. Interacts with SYVN1. Interacts with HERPUD1. Interacts with VCPKMT. May interact with DERL1. Interacts with PLAA, VCP and YOD1; may form a complex involved in macroautophagy. Interacts with LMAN1.

The protein localises to the cytoplasm. It is found in the cytosol. Its subcellular location is the membrane. It localises to the nucleus. The protein resides in the cytoskeleton. The protein localises to the microtubule organizing center. It is found in the centrosome. Its subcellular location is the early endosome membrane. It localises to the late endosome membrane. The protein resides in the lysosome membrane. Functionally, may negatively regulate the ATPase activity of VCP, an ATP-driven segregase that associates with different cofactors to control a wide variety of cellular processes. As a cofactor of VCP, it may play a role in the transport of CAV1 to lysosomes for degradation. It may also play a role in endoplasmic reticulum-associated degradation (ERAD) of misfolded proteins. Together with VCP and other cofactors, it may play a role in macroautophagy, regulating for instance the clearance of damaged lysosomes. The protein is UBX domain-containing protein 6 of Bos taurus (Bovine).